Here is a 2148-residue protein sequence, read N- to C-terminus: MNHVTIKQSDTRADPFRVFIFGDQSSCNLSNLQLLLFKKSNVYLASFIDQVNLTLRHEVARLTAAERQSFPAFSSVQNLVARALKKDTSVALESTLATIYHLCCFINYFGDGQEAYPTGPTTHVSGLCIGALAAAAVSSSKSLAELVQAGIDAVRVSLKVGLLVARTAALFSHQESNGTSSSPWSYAVPDSQLPLALAEEAIESYQAKTNIPPLSLPYISAKGQNSWTVSGPPAIVQHFLETSQFEKTLRLTPLAVHAPYHAPHIFSAIDVQHIIRAVGPVSSFSSKLAFISSSSSRNLPTGLKFQDLLYRAVEDILILPLDLREAAENIRLVLEATDNVQQCALFPISTGVGPSLKQSFSSAMASRVSIVDCIMERVAADAGPKSTSGPKPSESKIAIIGMSGRFPESADVEAFWDLLHQGLDVHRPVPPDRFNGELYYDVTGKRKNTCKVMHGCWINDPGLFDAKFFNISPKEAEQSDPGQRLALATAYEALEAAGVVADRTPSTQRDRVGVFYGMTSDDYREVSCGQNVDTYFIPGGNRAFTPGKINYFFKYCGPSVSVDTACSSSLAAIHLACNSIWRNECDTAIAGGTNVMSNPDSFVGLDRGYFLSRTGNCHTFDDEADGYCRADAVGTVILKRLEDAIADHDPILGVISGALTNHSADAVSITRPHSGAQEEIFSKLLTESGVHPHQVSYIEMHGTGTQAGDATEMTSVLNCFAPSTSPRRLPHESLHLGSTKANVGHSESASGVSALIKVLLMMEKNIIPPHCGIKGKINHKFPTDLDERNVHIAKTATQWNRRNELNNIRRAFVNNFSAAGGNTALLVEDYPLLIADSSQQDARTAHVVTVSAKSIKSLKGNLENLKKFVQKQASTEGFLPKLSYTTTSRRMHHPFRVAIPAANSEQLLSALDEELKHDSYTCCSESPVAFVFSGQGSQYSSMGQHLLHFTIFRDEVHAYDILAQRHGFPSIMPLIDGSVDIEDLEPLVVQLGTVCVQMALASLWMALGMRPAYVVGHSLGHYAALKVAGVLTASDTIYLVAMRARLLQNKCSRGSHAMLAIRSSVAEIQAHLDEGIYDIACINGPQDTVVSGCIDDIDRLSQKLMDKGIKATRVNVPFAFHSAQVDPILDELEAIASQVEFHAPRVAVGCPLLGKTFKAGETPSLEAKHIRRHCRETVNFLDVLRSAKDDGFVSDKTAWIEIGPHTVCSNLVKANINQDITAVPSLMRNKDGWQVLASSVATLYRHGSSVAWDEYHHDFEACKQVLRLPAYSWDNKLYWIDYVHDWLLTRGDPPVQAAASLPAPPLTFSTASVHRIVHESVEKGKLTLTAECEFTNEQLREVVYGHVVNGNRVCSSSLYTDFGVTLGSYILEKYRPDLQGHAVDVQDMVVNKALVHKEGPTMLLRIDVVLDTTDSKAASMSIYSVNSKGNKTADHAQSSLHFEQPKVWLKSWDSTQYYVERSIEWLKEKADQGLNSRMSSGVIYKLFSSLVDYSTAYKGMQEAIVNTEDFEATALVRFQVDEGNFRCNPMWVDSCGQLAGFLMNGHAKTPKDQVFINHGWQYFRTVRKFSRDKTYRTYVRMRCVEGTTYAGDVYIFDDEGIVGVCGSITFQGIPRKVLNTAMPPPKSQNEAPVRSGPAKPAAKPPRSASSEHSGHFARHANIEPLKLDAALKSATTARNPMLPVFKIVAEEIGIPSASVDNGLVFADYGVDSLLSLSISGRLREELDLDVESSAFETCATLADLAAHLGLDTFSSDQSSGQSSSFGGLSPRSDSIGEITSSVTTPPSLSPRSSVSGSQCKDVCAILAEEIGVSMGEITNDTDLGALGMDSLMSLAVLSRLREELELDLEGDFFVSHPNFSSFKHMFQQGHGDEVGPEPSAELKQYRATSTLLQGSPKSALYTLFLLPDGSGSSFSYAPINAVRKDVCVFGLNCPWLKSAEKLVQFGLKGLATLYVEEIRRRAPHGPYNLGGWSAGGICAYEAAIQFTREGETVERLILLDSPNPIGLEKLPARLFDFVNGLGLFGDGKAPDWLLAHFLAFIDALDEWKPVPWDKALGGNSPPPMTYILWAEDGICKGTDARPEYRDDDPREMKWLLENRTNFGGNNWDVLLGQQSLSIERIQDANHFTMLRKGKNTERVAAFIRSTFG.

The N-terminal acylcarrier protein transacylase domain (SAT) stretch occupies residues 19 to 261; the sequence is FIFGDQSSCN…TPLAVHAPYH (243 aa). A Ketosynthase family 3 (KS3) domain is found at 394–829; the sequence is ESKIAIIGMS…GGNTALLVED (436 aa). Catalysis depends on for beta-ketoacyl synthase activity residues Cys-566, His-701, and His-745. Residues 929 to 1233 are malonyl-CoA:ACP transacylase (MAT) domain; the sequence is AFVFSGQGSQ…PSLMRNKDGW (305 aa). Catalysis depends on Ser-1018, which acts as the For acyl/malonyl transferase activity. Residues 1310 to 1624 form a product template (PT) domain region; sequence TASVHRIVHE…RKVLNTAMPP (315 aa). The interval 1314 to 1447 is N-terminal hotdog fold; that stretch reads HRIVHESVEK…SSLHFEQPKV (134 aa). In terms of domain architecture, PKS/mFAS DH spans 1314–1619; it reads HRIVHESVEK…FQGIPRKVLN (306 aa). Residue His-1346 is the Proton acceptor; for dehydratase activity of the active site. Residues 1474–1619 form a C-terminal hotdog fold region; sequence LNSRMSSGVI…FQGIPRKVLN (146 aa). Asp-1533 functions as the Proton donor; for dehydratase activity in the catalytic mechanism. A disordered region spans residues 1619–1655; it reads NTAMPPPKSQNEAPVRSGPAKPAAKPPRSASSEHSGH. A compositionally biased stretch (low complexity) spans 1634–1650; that stretch reads RSGPAKPAAKPPRSASS. A Carrier 1 domain is found at 1678–1752; that stretch reads RNPMLPVFKI…DLAAHLGLDT (75 aa). Position 1712 is an O-(pantetheine 4'-phosphoryl)serine (Ser-1712). 2 stretches are compositionally biased toward low complexity: residues 1757 to 1769 and 1779 to 1796; these read QSSGQSSSFGGLS and TSSVTTPPSLSPRSSVSG. The interval 1757 to 1796 is disordered; that stretch reads QSSGQSSSFGGLSPRSDSIGEITSSVTTPPSLSPRSSVSG. One can recognise a Carrier 2 domain in the interval 1793 to 1870; sequence SVSGSQCKDV…SFKHMFQQGH (78 aa). Ser-1830 is modified (O-(pantetheine 4'-phosphoryl)serine). Positions 1882–2146 are thioesterase (TE) domain; it reads LKQYRATSTL…ERVAAFIRST (265 aa). The For thioesterase activity role is filled by Ser-1973.

Its function is as follows. Polyketide synthase; part of the Pks1 gene cluster that mediates the biosynthesis of an anthraquinone derivative pigment that contributes to conidial pigmentation that provides protection from UV radiation, heat and cold stress. The polyketide synthase Pks1 produces 1-acetyl-2,4,6,8-tetrahydroxy-9,10-anthraquinone though condensation of acetyl-CoA with malonyl-CoA. The dehydratase EthD and the laccase Mlac1 further convert the anthraquinone derivative into the final conidial pigment. The polypeptide is Polyketide synthase 1 (Metarhizium anisopliae (strain ARSEF 549)).